The primary structure comprises 515 residues: Protein DETOXIFICATION 32 (515 aa).

Residues 1–26 show a composition bias toward basic and acidic residues; sequence METLNVDHEDTISSEQEHRAHTKSDT. The segment at 1–30 is disordered; the sequence is METLNVDHEDTISSEQEHRAHTKSDTDMPP. Helical transmembrane passes span 48–68, 90–110, 131–151, 167–187, 194–214, 225–245, 276–296, 303–323, 347–367, 392–412, 418–438, and 448–468; these read LWWLAGPAIFTSFCQYSLGAV, VISGFSVGIMLGMGSALATLC, IILNSCALLLCLFYVFATPLL, FSLWMIPQLFAYAVNFATAKF, VIAMAVIAATVLLQHTLLSWL, GGAVVLNMSWWLIDVTQIVYI, AVMVCLEVWYFMALILFAGYL, VAALSICMNILGWPIMVAFGF, LIVAMITSVSIGIVISVTLIV, LLALTIVINNIQPVLSGVAVG, IVAYVNIGCYYLCGIPIGLVL, and GIWTGMLTGTVVQTSVLLFII. Residues 488–497 show a composition bias toward basic and acidic residues; the sequence is GDQSNKREEI. The segment at 488–515 is disordered; the sequence is GDQSNKREEIDLCEEDENNSNGENNHRK. A compositionally biased stretch (low complexity) spans 506-515; it reads NSNGENNHRK.

It belongs to the multi antimicrobial extrusion (MATE) (TC 2.A.66.1) family.

It localises to the membrane. This Arabidopsis thaliana (Mouse-ear cress) protein is Protein DETOXIFICATION 32.